Here is an 855-residue protein sequence, read N- to C-terminus: DNA mismatch repair protein MutS (855 aa).

613-620 lines the ATP pocket; sequence GPNMGGKS. Residues 796–816 are disordered; the sequence is TTSLPHEMPSQQSGKPASPMQ.

It belongs to the DNA mismatch repair MutS family.

This protein is involved in the repair of mismatches in DNA. It is possible that it carries out the mismatch recognition step. This protein has a weak ATPase activity. This chain is DNA mismatch repair protein MutS, found in Pseudomonas aeruginosa (strain ATCC 15692 / DSM 22644 / CIP 104116 / JCM 14847 / LMG 12228 / 1C / PRS 101 / PAO1).